A 73-amino-acid polypeptide reads, in one-letter code: Large ribosomal subunit protein bL27c (73 aa).

The protein belongs to the bacterial ribosomal protein bL27 family.

The protein resides in the plastid. The protein localises to the chloroplast. The sequence is that of Large ribosomal subunit protein bL27c (rpl27) from Chrysochromulina alifera (Plankton alga).